A 358-amino-acid chain; its full sequence is Heterogeneous nuclear ribonucleoprotein A2 homolog 2 (358 aa).

2 RRM domains span residues 9–92 and 100–179; these read RKLF…ESAK and KKLF…LSKQ. Disordered stretches follow at residues 182 to 217 and 333 to 358; these read QDVQ…FRGG and YGGG…RNRY. A compositionally biased stretch (gly residues) spans 193-217; it reads GNFGFGDSRGGGNFGSGPGGNFRGG. A nuclear targeting sequence region spans residues 309-352; it reads QQSSSYGPMKSGGNFGGNRSMGGPYGGGNYGPGNGSGASGGGGY.

The protein resides in the nucleus. Forms complexes (ribonucleosomes) with at least 20 other different hnRNP and heterogeneous nuclear RNA in the nucleus. This chain is Heterogeneous nuclear ribonucleoprotein A2 homolog 2, found in Xenopus laevis (African clawed frog).